Consider the following 412-residue polypeptide: Lipoyl synthase, mitochondrial (412 aa).

Cys-127, Cys-132, Cys-138, Cys-159, Cys-163, Cys-166, and Ser-375 together coordinate [4Fe-4S] cluster. The Radical SAM core domain maps to 142 to 364 (SDDEGTATAT…EKEAMDMGFL (223 aa)).

This sequence belongs to the radical SAM superfamily. Lipoyl synthase family. It depends on [4Fe-4S] cluster as a cofactor.

It localises to the mitochondrion. It carries out the reaction [[Fe-S] cluster scaffold protein carrying a second [4Fe-4S](2+) cluster] + N(6)-octanoyl-L-lysyl-[protein] + 2 oxidized [2Fe-2S]-[ferredoxin] + 2 S-adenosyl-L-methionine + 4 H(+) = [[Fe-S] cluster scaffold protein] + N(6)-[(R)-dihydrolipoyl]-L-lysyl-[protein] + 4 Fe(3+) + 2 hydrogen sulfide + 2 5'-deoxyadenosine + 2 L-methionine + 2 reduced [2Fe-2S]-[ferredoxin]. The protein operates within protein modification; protein lipoylation via endogenous pathway; protein N(6)-(lipoyl)lysine from octanoyl-[acyl-carrier-protein]: step 2/2. In terms of biological role, catalyzes the radical-mediated insertion of two sulfur atoms into the C-6 and C-8 positions of the octanoyl moiety bound to the lipoyl domains of lipoate-dependent enzymes, thereby converting the octanoylated domains into lipoylated derivatives. The sequence is that of Lipoyl synthase, mitochondrial from Leishmania infantum.